A 322-amino-acid polypeptide reads, in one-letter code: ATP-dependent 6-phosphofructokinase (322 aa).

G11 serves as a coordination point for ATP. Position 21 to 25 (21 to 25 (RAVTR)) interacts with ADP. ATP-binding positions include 72–73 (RC) and 102–105 (GDGS). D103 contacts Mg(2+). 127–129 (TID) serves as a coordination point for substrate. Residue D129 is the Proton acceptor of the active site. R156 contributes to the ADP binding site. Substrate-binding positions include R164 and 171–173 (MGR). ADP is bound by residues 187 to 189 (GAE), R213, and 215 to 217 (KKH). Substrate is bound by residues E224, R245, and 251–254 (HIQR).

This sequence belongs to the phosphofructokinase type A (PFKA) family. ATP-dependent PFK group I subfamily. Prokaryotic clade 'B1' sub-subfamily. Homotetramer. Mg(2+) serves as cofactor.

The protein localises to the cytoplasm. The catalysed reaction is beta-D-fructose 6-phosphate + ATP = beta-D-fructose 1,6-bisphosphate + ADP + H(+). Its pathway is carbohydrate degradation; glycolysis; D-glyceraldehyde 3-phosphate and glycerone phosphate from D-glucose: step 3/4. Its activity is regulated as follows. Allosterically activated by ADP and other diphosphonucleosides, and allosterically inhibited by phosphoenolpyruvate. Its function is as follows. Catalyzes the phosphorylation of D-fructose 6-phosphate to fructose 1,6-bisphosphate by ATP, the first committing step of glycolysis. This is ATP-dependent 6-phosphofructokinase from Staphylococcus epidermidis (strain ATCC 35984 / DSM 28319 / BCRC 17069 / CCUG 31568 / BM 3577 / RP62A).